The following is a 466-amino-acid chain: ATP synthase subunit beta (466 aa).

Gly152–Thr159 serves as a coordination point for ATP.

It belongs to the ATPase alpha/beta chains family. F-type ATPases have 2 components, CF(1) - the catalytic core - and CF(0) - the membrane proton channel. CF(1) has five subunits: alpha(3), beta(3), gamma(1), delta(1), epsilon(1). CF(0) has three main subunits: a(1), b(2) and c(9-12). The alpha and beta chains form an alternating ring which encloses part of the gamma chain. CF(1) is attached to CF(0) by a central stalk formed by the gamma and epsilon chains, while a peripheral stalk is formed by the delta and b chains.

It localises to the cell inner membrane. The catalysed reaction is ATP + H2O + 4 H(+)(in) = ADP + phosphate + 5 H(+)(out). Functionally, produces ATP from ADP in the presence of a proton gradient across the membrane. The catalytic sites are hosted primarily by the beta subunits. The sequence is that of ATP synthase subunit beta from Helicobacter pylori (strain HPAG1).